Here is a 177-residue protein sequence, read N- to C-terminus: ATP-dependent protease subunit HslV (177 aa).

Residue threonine 6 is part of the active site. Positions 162, 165, and 168 each coordinate Na(+).

This sequence belongs to the peptidase T1B family. HslV subfamily. As to quaternary structure, a double ring-shaped homohexamer of HslV is capped on each side by a ring-shaped HslU homohexamer. The assembly of the HslU/HslV complex is dependent on binding of ATP.

It localises to the cytoplasm. The enzyme catalyses ATP-dependent cleavage of peptide bonds with broad specificity.. Its activity is regulated as follows. Allosterically activated by HslU binding. In terms of biological role, protease subunit of a proteasome-like degradation complex believed to be a general protein degrading machinery. This Desulfovibrio desulfuricans (strain ATCC 27774 / DSM 6949 / MB) protein is ATP-dependent protease subunit HslV.